We begin with the raw amino-acid sequence, 2035 residues long: Host cell factor 1 (2035 aa).

An N-acetylalanine modification is found at alanine 2. Serine 6 carries the phosphoserine modification. 5 Kelch repeats span residues 44–89 (LIVV…GFVC), 93–140 (RLLV…RLGH), 148–194 (KCYL…ITYG), 217–265 (KLVI…TIGN), and 266–313 (KMYV…LMDT). Glycyl lysine isopeptide (Lys-Gly) (interchain with G-Cter in ubiquitin) cross-links involve residues lysine 105, lysine 163, and lysine 244. A Glycyl lysine isopeptide (Lys-Gly) (interchain with G-Cter in SUMO2) cross-link involves residue lysine 282. Lysine 288 bears the N6-acetyllysine mark. Residue lysine 363 forms a Glycyl lysine isopeptide (Lys-Gly) (interchain with G-Cter in ubiquitin) linkage. The 101-residue stretch at 366–466 (PPARVQLVRA…TTTTIQVLPT (101 aa)) folds into the Fibronectin type-III 1 domain. Residues 407–434 (ATATSPTPNPVPSVPANPPKSPAPAAAA) are disordered. Position 411 is a phosphoserine (serine 411). A compositionally biased stretch (pro residues) spans 413–428 (TPNPVPSVPANPPKSP). The tract at residues 500 to 550 (LVTMRPASQAGKAPVTVTSLPAGVRMVVPTQSAQGTVIGSSPQMSGMAALA) is required for interaction with OGT. Omega-N-methylarginine is present on residues arginine 504 and arginine 524. Phosphoserine is present on residues serine 598, serine 666, and serine 669. The interval 610 to 722 (LKTAAAQVGT…KGPLPAGTIL (113 aa)) is interaction with SIN3A. Positions 750-902 (ILGISSVSPS…SLAGAGGHST (153 aa)) are interaction with ZBTB17. At lysine 813 the chain carries N6-acetyllysine. The interval 813-912 (KIITAVPKIA…SASLATPITT (100 aa)) is interaction with GABP2. HCF repeat repeat units follow at residues 1010-1035 (TLVC…TVVA), 1072-1097 (VRVC…ATSN), and 1101-1126 (QHGC…AMSS). Residues 1158-1183 (AAQGSKSQCQTRQTSATSTTMTVMAT) form an HCF repeat 4; degenerate repeat. Serine 1205 bears the Phosphoserine mark. Omega-N-methylarginine is present on arginine 1219. At serine 1224 the chain carries Phosphoserine. 2 HCF repeat repeats span residues 1286 to 1311 (TQVC…SNAG) and 1314 to 1339 (QRVC…ATSN). Disordered regions lie at residues 1292–1371 (PPCE…TMSV), 1435–1470 (TVTS…TSSS), and 1487–1515 (VTQS…QQLP). Composition is skewed to low complexity over residues 1299–1312 (TGTT…NAGS), 1329–1339 (TTHTATTATSN), and 1362–1371 (TTSTGTTMSV). One copy of the HCF repeat 7; degenerate repeat lies at 1349–1374 (QQPPAGRPCETHQTTSTGTTMSVSVG). Residues 1414–1439 (QRVCSNPPCETHETGTTHTATTVTSN) form an HCF repeat 8 repeat. Residue threonine 1491 is modified to Phosphothreonine. The span at 1493–1502 (VPGPSVPPPE) shows a compositional bias: pro residues. Phosphoserine is present on residues serine 1497, serine 1507, and serine 1771. Fibronectin type-III domains are found at residues 1797–1888 (LPPP…TCLP) and 1890–2006 (FPGA…TSKD). Glycyl lysine isopeptide (Lys-Gly) (interchain with G-Cter in ubiquitin) cross-links involve residues lysine 1807 and lysine 1808. Serine 1838 carries the post-translational modification Phosphoserine. The interval 1994-2035 (ATQVRWLQETSKDSSGTKPANKRPMSSPEMKSAPKKSKADGQ) is disordered. Lysine 2005 carries the N6-acetyllysine modification. Lysine 2024 participates in a covalent cross-link: Glycyl lysine isopeptide (Lys-Gly) (interchain with G-Cter in SUMO2).

Composed predominantly of six polypeptides ranging from 110 to 150 kDa and a minor 300 kDa polypeptide. The majority of N- and C-terminal cleavage products remain tightly, albeit non-covalently, associated. Interacts with POU2F1, CREB3, ZBTB17, EGR2, E2F4, CREBZF, SP1, GABP2, Sin3 HDAC complex (SIN3A, HDAC1, HDAC2, SUDS3), SAP30, SIN3B and FHL2. Component of a MLL1 complex, composed of at least the core components KMT2A/MLL1, ASH2L, HCFC1, WDR5 and RBBP5, as well as the facultative components BACC1, CHD8, DPY30, E2F6, HCFC2, HSP70, INO80C, KANSL1, LAS1L, MAX, MCRS1, MEN1, MGA, KAT8, PELP1, PHF20, PRP31, RING2, RUVBL1, RUVBL2, SENP3, TAF1, TAF4, TAF6, TAF7, TAF9 and TEX10. Component of a THAP1/THAP3-HCFC1-OGT complex that is required for the regulation of the transcriptional activity of RRM1. Interacts directly with THAP3 (via its HBM). Interacts (via the Kelch-repeat domain) with THAP1 (via the HBM); the interaction recruits HCHC1 to the RRM1. Interacts with THAP7 and THAP11 (via the HMB). Interacts directly with OGT; the interaction, which requires the HCFC1 cleavage site domain, glycosylates and promotes the proteolytic processing of HCFC1, retains OGT in the nucleus and impacts the expression of herpes simplex virus immediate early viral genes. Component of the SET1 complex, at least composed of the catalytic subunit (SETD1A or SETD1B), WDR5, WDR82, RBBP5, ASH2L, CXXC1, HCFC1 and DPY30. Component of the NSL complex at least composed of MOF/KAT8, KANSL1, KANSL2, KANSL3, MCRS1, PHF20, OGT1/OGT, WDR5 and HCFC1. Component of a complex at least composed of ZNF335, HCFC1, CCAR2, EMSY, MKI67, RBBP5, ASH2L and WDR5; the complex is formed as a result of interactions between components of a nuclear receptor-mediated transcription complex and a histone methylation complex. Within the complex interacts with ZNF335. Interacts with TET2 and TET3. Interacts with HCFC1R1. Interacts with THAP11. Interacts (via Kelch domain) with KMT2E/MLL5 isoform 3 (via HBM motif). Interacts with E2F1. Accessory scaffold component of the polycomb repressive deubiquitinase (PR-DUB) complex, at least composed of BAP1, one of ASXL1, ASXL2 or (probably) ASXL3 and one of MBD5 or MBD6; the PR-DUB core associates with a number of accessory proteins, including FOXK1, FOXK2, KDM1B, HCFC1, YY1 and OGT. Interacts with YY1 (via Gly-rich region); the interaction is direct. Interacts with BAP1 (via HBM-like motif). As to quaternary structure, (Microbial infection) Associates with the VP16-induced complex; binding to HCFC1 activates the viral transcriptional activator VP16 for association with POU2F1, to form a multiprotein-DNA complex responsible for activating transcription of the viral immediate early genes. Interacts with the viral transactivator protein VP16. Proteolytically cleaved at one or several PPCE--THET sites within the HCF repeats. Further cleavage of the primary N- and C-terminal chains results in a 'trimming' and accumulation of the smaller chains. Cleavage is promoted by O-glycosylation. In terms of processing, O-glycosylated. GlcNAcylation by OGT promotes proteolytic processing. Post-translationally, ubiquitinated. Lys-1807 and Lys-1808 are ubiquitinated both via 'Lys-48'- and 'Lys-63'-linked polyubiquitin chains. BAP1 mediated deubiquitination of 'Lys-48'-linked polyubiquitin chains; deubiquitination by BAP1 does not seem to stabilize the protein. In terms of tissue distribution, highly expressed in fetal tissues and the adult kidney. Present in all tissues tested.

The protein resides in the cytoplasm. It is found in the nucleus. In terms of biological role, transcriptional coregulator. Serves as a scaffold protein, bridging interactions between transcription factors, including THAP11 and ZNF143, and transcriptional coregulators. Involved in control of the cell cycle. Also antagonizes transactivation by ZBTB17 and GABP2; represses ZBTB17 activation of the p15(INK4b) promoter and inhibits its ability to recruit p300. Coactivator for EGR2 and GABP2. Tethers the chromatin modifying Set1/Ash2 histone H3 'Lys-4' methyltransferase (H3K4me) and Sin3 histone deacetylase (HDAC) complexes (involved in the activation and repression of transcription, respectively) together. Component of a THAP1/THAP3-HCFC1-OGT complex that is required for the regulation of the transcriptional activity of RRM1. As part of the NSL complex it may be involved in acetylation of nucleosomal histone H4 on several lysine residues. Recruits KMT2E/MLL5 to E2F1 responsive promoters promoting transcriptional activation and thereby facilitates G1 to S phase transition. Modulates expression of homeobox protein PDX1, perhaps acting in concert with transcription factor E2F1, thereby regulating pancreatic beta-cell growth and glucose-stimulated insulin secretion. May negatively modulate transcriptional activity of FOXO3. (Microbial infection) In case of human herpes simplex virus (HSV) infection, HCFC1 forms a multiprotein-DNA complex with the viral transactivator protein VP16 and POU2F1 thereby enabling the transcription of the viral immediate early genes. The polypeptide is Host cell factor 1 (Homo sapiens (Human)).